Here is a 356-residue protein sequence, read N- to C-terminus: Serpentine receptor class epsilon-29 (356 aa).

7 helical membrane passes run 29 to 49 (IVEL…IYII), 61 to 81 (ILAI…LITI), 119 to 139 (LLIF…FGVL), 161 to 181 (LFIP…TSLA), 190 to 210 (FLAQ…YFFV), 251 to 271 (LVFV…ALFY), and 281 to 301 (FVEN…IFSV).

The protein belongs to the nematode receptor-like protein sre family.

The protein localises to the membrane. This Caenorhabditis elegans protein is Serpentine receptor class epsilon-29 (sre-29).